A 322-amino-acid chain; its full sequence is Protein SEC13 homolog (322 aa).

V2 is modified (N-acetylvaline). 6 WD repeats span residues 11–50, 55–96, 101–144, 148–204, 210–253, and 260–299; these read SHED…QILI, GHEG…WEKS, GHDS…EVKK, AHTI…QWKE, AHSD…SNTW, and KFND…QWVC. S184 is subject to Phosphoserine. Residue S309 is modified to Phosphoserine.

Belongs to the WD repeat SEC13 family. At the nuclear pore: component of the Y-shaped Nup107-160 subcomplex of the nuclear pore complex (NPC). The Nup107-160 subcomplex includes NUP160, NUP133, NUP107, NUP98, NUP85, NUP43, NUP37, SEH1 and SEC13. At the COPII coat complex: interacts with SEC31A and SEC31B. Interacts with SEC16A. Interacts with SEC16B. Component of the GATOR2 subcomplex, composed of MIOS, SEC13, SEH1L, WDR24 and WDR59. The GATOR2 complex interacts with CASTOR1 and CASTOR2; the interaction is negatively regulated by arginine. The GATOR2 complex interacts with SESN1, SESN2 and SESN3; the interaction is negatively regulated by amino acids.

It is found in the cytoplasmic vesicle. It localises to the COPII-coated vesicle membrane. The protein resides in the endoplasmic reticulum membrane. The protein localises to the nucleus. Its subcellular location is the nuclear pore complex. It is found in the lysosome membrane. The GATOR2 complex is negatively regulated by the upstream amino acid sensors CASTOR1 and SESN2, which sequester the GATOR2 complex in absence of amino acids. In the presence of abundant amino acids, GATOR2 is released from CASTOR1 and SESN2 and activated. Functions as a component of the nuclear pore complex (NPC) and the COPII coat. At the endoplasmic reticulum, SEC13 is involved in the biogenesis of COPII-coated vesicles. Required for the exit of adipsin (CFD/ADN), an adipocyte-secreted protein from the endoplasmic reticulum. Its function is as follows. As a component of the GATOR2 complex, functions as an activator of the amino acid-sensing branch of the mTORC1 signaling pathway. The GATOR2 complex indirectly activates mTORC1 through the inhibition of the GATOR1 subcomplex. GATOR2 probably acts as an E3 ubiquitin-protein ligase toward GATOR1. In the presence of abundant amino acids, the GATOR2 complex mediates ubiquitination of the NPRL2 core component of the GATOR1 complex, leading to GATOR1 inactivation. In the absence of amino acids, GATOR2 is inhibited, activating the GATOR1 complex. Within the GATOR2 complex, SEC13 and SEH1L are required to stabilize the complex. The chain is Protein SEC13 homolog from Homo sapiens (Human).